The primary structure comprises 151 residues: Transcriptional regulator MraZ (151 aa).

SpoVT-AbrB domains lie at 5-51 (AHEL…PVAE) and 81-124 (AEIL…GREQ).

The protein belongs to the MraZ family. Forms oligomers.

The protein resides in the cytoplasm. The protein localises to the nucleoid. This Neisseria meningitidis serogroup C / serotype 2a (strain ATCC 700532 / DSM 15464 / FAM18) protein is Transcriptional regulator MraZ.